A 180-amino-acid polypeptide reads, in one-letter code: MSRIGRKSIPVPAGVDVTIDGQTVKVKGPKGELSHTLAEPITVERAEDGQLNVARPNDERKAKELHGLSRTLVANMIVGVTEGYRKSLEIAGTGYRVTAKGKDLEFALGFSHPVTVVAPEGITFSVEKPTLFHVAGINKQLVGEVAANIRKIRPPEPYKGKGVKYQGEVIRRKAGKAGKK.

Belongs to the universal ribosomal protein uL6 family. In terms of assembly, part of the 50S ribosomal subunit.

Its function is as follows. This protein binds to the 23S rRNA, and is important in its secondary structure. It is located near the subunit interface in the base of the L7/L12 stalk, and near the tRNA binding site of the peptidyltransferase center. This is Large ribosomal subunit protein uL6 from Salinispora arenicola (strain CNS-205).